The sequence spans 217 residues: Somatotropin (217 aa).

A signal peptide spans 1-27; it reads MMAAGPRTSLLLAFALLCLPWTQMVGA. His-46 contacts Zn(2+). Cys-79 and Cys-190 form a disulfide bridge. At Ser-132 the chain carries Phosphoserine. Position 199 (Glu-199) interacts with Zn(2+). Cys-207 and Cys-215 are joined by a disulfide.

It belongs to the somatotropin/prolactin family.

It is found in the secreted. Its function is as follows. Plays an important role in growth control. Its major role in stimulating body growth is to stimulate the liver and other tissues to secrete IGF1. It stimulates both the differentiation and proliferation of myoblasts. It also stimulates amino acid uptake and protein synthesis in muscle and other tissues. This is Somatotropin (GH1) from Giraffa camelopardalis (Giraffe).